The sequence spans 44 residues: Homeobox protein DLX-1 (44 aa).

The interval 19-44 (RALSAGSPPVPPGWNRIPPLGRAQEE) is disordered.

Belongs to the distal-less homeobox family. Interacts with SMAD4 (via homeobox DNA-binding domain). Interacts (via homeobox DNA-binding domain) with POU4F2; this interaction suppresses DLX1-mediated transcriptional activity in postnatal retina and enhances retinal ganglion cell (RGC) differentiation.

It localises to the nucleus. In terms of biological role, plays a role as a transcriptional activator or repressor. Inhibits several cytokine signaling pathways, such as TGFB1, activin-A/INHBA and BMP4 by interfering with the transcriptional stimulatory activity of transcription factors, such as MSX2, FAST2, SMAD2 and SMAD3 during hematopoietic cell differentiation. Plays a role in terminal differentiation of interneurons, such as amacrine and bipolar cells in the developing retina. Likely to play a regulatory role in the development of the ventral forebrain. May play a role in craniofacial patterning and morphogenesis and may be involved in the early development of diencephalic subdivisions. This chain is Homeobox protein DLX-1 (Dlx1), found in Rattus norvegicus (Rat).